The chain runs to 386 residues: Bifunctional enzyme IspD/IspF (386 aa).

Positions 1-231 are 2-C-methyl-D-erythritol 4-phosphate cytidylyltransferase; it reads MKNGAVIIPA…REKKEPMQKI (231 aa). A 2-C-methyl-D-erythritol 2,4-cyclodiphosphate synthase region spans residues 232–386; it reads RIGHGFDAHQ…SCHAVVLLQQ (155 aa). A divalent metal cation contacts are provided by D238 and H240. Residues 238-240 and 264-265 contribute to the 4-CDP-2-C-methyl-D-erythritol 2-phosphate site; these read DAH and HS. Residue H272 coordinates a divalent metal cation. 4-CDP-2-C-methyl-D-erythritol 2-phosphate is bound by residues 286–288, 362–365, Y369, and R372; these read DIG and TTTE.

In the N-terminal section; belongs to the IspD/TarI cytidylyltransferase family. IspD subfamily. This sequence in the C-terminal section; belongs to the IspF family. The cofactor is a divalent metal cation.

It catalyses the reaction 2-C-methyl-D-erythritol 4-phosphate + CTP + H(+) = 4-CDP-2-C-methyl-D-erythritol + diphosphate. The enzyme catalyses 4-CDP-2-C-methyl-D-erythritol 2-phosphate = 2-C-methyl-D-erythritol 2,4-cyclic diphosphate + CMP. The protein operates within isoprenoid biosynthesis; isopentenyl diphosphate biosynthesis via DXP pathway; isopentenyl diphosphate from 1-deoxy-D-xylulose 5-phosphate: step 2/6. Its pathway is isoprenoid biosynthesis; isopentenyl diphosphate biosynthesis via DXP pathway; isopentenyl diphosphate from 1-deoxy-D-xylulose 5-phosphate: step 4/6. Its function is as follows. Bifunctional enzyme that catalyzes the formation of 4-diphosphocytidyl-2-C-methyl-D-erythritol from CTP and 2-C-methyl-D-erythritol 4-phosphate (MEP) (IspD), and catalyzes the conversion of 4-diphosphocytidyl-2-C-methyl-D-erythritol 2-phosphate (CDP-ME2P) to 2-C-methyl-D-erythritol 2,4-cyclodiphosphate (ME-CPP) with a corresponding release of cytidine 5-monophosphate (CMP) (IspF). The chain is Bifunctional enzyme IspD/IspF from Desulfotalea psychrophila (strain LSv54 / DSM 12343).